We begin with the raw amino-acid sequence, 212 residues long: Deoxyribose-phosphate aldolase (212 aa).

The active-site Proton donor/acceptor is the Asp-89. The active-site Schiff-base intermediate with acetaldehyde is Lys-151. The Proton donor/acceptor role is filled by Lys-180.

Belongs to the DeoC/FbaB aldolase family. DeoC type 1 subfamily.

It localises to the cytoplasm. It carries out the reaction 2-deoxy-D-ribose 5-phosphate = D-glyceraldehyde 3-phosphate + acetaldehyde. The protein operates within carbohydrate degradation; 2-deoxy-D-ribose 1-phosphate degradation; D-glyceraldehyde 3-phosphate and acetaldehyde from 2-deoxy-alpha-D-ribose 1-phosphate: step 2/2. Functionally, catalyzes a reversible aldol reaction between acetaldehyde and D-glyceraldehyde 3-phosphate to generate 2-deoxy-D-ribose 5-phosphate. In Clostridium botulinum (strain Langeland / NCTC 10281 / Type F), this protein is Deoxyribose-phosphate aldolase.